A 483-amino-acid chain; its full sequence is Probable gamma-aminobutyrate transaminase 4 (483 aa).

Position 138–139 (138–139 (GS)) interacts with pyridoxal 5'-phosphate. Substrate is bound at residue Y171. D278 serves as a coordination point for pyridoxal 5'-phosphate. Substrate is bound at residue K307. The residue at position 307 (K307) is an N6-(pyridoxal phosphate)lysine.

This sequence belongs to the class-III pyridoxal-phosphate-dependent aminotransferase family. In terms of tissue distribution, not detected in roots, stems, flowers or leaves of healthy plants.

It is found in the cytoplasm. The catalysed reaction is 4-aminobutanoate + pyruvate = succinate semialdehyde + L-alanine. It catalyses the reaction 4-aminobutanoate + glyoxylate = succinate semialdehyde + glycine. In terms of biological role, transaminase that degrades gamma-amino butyric acid (GABA). This chain is Probable gamma-aminobutyrate transaminase 4 (GABA-T), found in Oryza sativa subsp. japonica (Rice).